The following is a 77-amino-acid chain: Teretoxin Tan15.2 (77 aa).

The N-terminal stretch at 1–21 is a signal peptide; that stretch reads MTRLTVVFLAILVLLPLATSN. Positions 22–40 are excised as a propeptide; it reads SGADEAPASLSDLLHRTKR.

In terms of processing, contains 4 disulfide bonds. Expressed by the venom duct.

It localises to the secreted. The polypeptide is Teretoxin Tan15.2 (Terebra anilis (Auger snail)).